The primary structure comprises 345 residues: Mariner Mos1 transposase (345 aa).

The segment at 1–112 (MSSFVPNKEQ…VSNRLREMGK (112 aa)) is DNA-binding. 2 consecutive DNA-binding regions (H-T-H motif) follow at residues 24 to 55 (TAAESHRMLVEAFGEQVPTVKKCERWFQRFKS) and 89 to 110 (QKQLAEQLEVSQQAVSNRLREM). The linker stretch occupies residues 113 to 125 (IQKVGRWVPHELN). The segment at 126 to 345 (ERQMERRKNT…CVASDGKYLE (220 aa)) is catalytic. The Mg(2+) site is built by aspartate 156, aspartate 249, and aspartate 284.

In terms of assembly, homodimer. The complex has a trans arrangement, with each transposon end recognized by the DNA binding region of one transposase monomer and by the active site of the other monomer. The cofactor is Mg(2+). Requires Mn(2+) as cofactor.

It localises to the nucleus. In terms of biological role, mediates transposition of transposon Mos1 by a 'cut and paste' mechanism. Transposases are sequence-specific nucleases and strand transferases that catalyze transposition through an ordered series of events: sequence-specific binding of transposase to the terminal inverted repeats (IR) present at each end of the transposon, pairing of the transposon IRs in a paired-end complex (PEC), cleavage of one or both DNA strands at each transposon end, capture of target DNA, and strand transfer to insert the transposon at a new site. The protein is Mariner Mos1 transposase (mariner\T) of Drosophila mauritiana (Fruit fly).